Consider the following 94-residue polypeptide: Cell division protein FtsB (94 aa).

The Cytoplasmic portion of the chain corresponds to 1–3; that stretch reads MRA. The chain crosses the membrane as a helical span at residues 4-21; that stretch reads FAVLLIIALGWLQYTLWF. Residues 22–94 lie on the Periplasmic side of the membrane; it reads GKNGMEDYAQ…YRIIDENSEE (73 aa). Positions 40–60 form a coiled coil; sequence EEVNQGLRNRNGQMFAEIDDL.

The protein belongs to the FtsB family. Part of a complex composed of FtsB, FtsL and FtsQ.

It localises to the cell inner membrane. Functionally, essential cell division protein. May link together the upstream cell division proteins, which are predominantly cytoplasmic, with the downstream cell division proteins, which are predominantly periplasmic. The protein is Cell division protein FtsB of Aliivibrio salmonicida (strain LFI1238) (Vibrio salmonicida (strain LFI1238)).